Consider the following 179-residue polypeptide: Apoptosis regulator Bcl-2 homolog (179 aa).

The BH1 signature appears at 76–95 (ELFKDLINWGRICGFIVFSA). The BH2 motif lies at 126-141 (PWMISHGGQEEFLAFS).

It belongs to the Bcl-2 family. Interacts with host BECN1 (via BH3 homology domain); this interaction allows the virus to inhibit BECN1, and thus autophagy. Interacts with host BID. Interacts with host BAX.

It is found in the host mitochondrion. It localises to the host endoplasmic reticulum. Functionally, suppresses apoptosis in host cell to promote the viral replication. Has the ability to potentially bind to all the members of the proapoptotic Bcl-2 family. Inhibits autophagy by interacting with host Beclin 1 (BECN1). The sequence is that of Apoptosis regulator Bcl-2 homolog from Ornithodoros (relapsing fever ticks).